A 245-amino-acid polypeptide reads, in one-letter code: NAD-dependent protein deacylase (245 aa).

Positions 1 to 237 (MNFPYRNIVV…PKLVEELLAH (237 aa)) constitute a Deacetylase sirtuin-type domain. Residue 13–32 (GAGISAESGIQTFRAQDGLW) participates in NAD(+) binding. Positions 57 and 60 each coordinate substrate. NAD(+) is bound at residue 94 to 97 (QNID). The active-site Proton acceptor is the histidine 112. Residues cysteine 120 and cysteine 139 each coordinate Zn(2+). NAD(+) is bound by residues 179-181 (GTS), 205-207 (NLE), and alanine 223.

This sequence belongs to the sirtuin family. Class III subfamily. Zn(2+) serves as cofactor.

It is found in the cytoplasm. It carries out the reaction N(6)-acetyl-L-lysyl-[protein] + NAD(+) + H2O = 2''-O-acetyl-ADP-D-ribose + nicotinamide + L-lysyl-[protein]. It catalyses the reaction N(6)-succinyl-L-lysyl-[protein] + NAD(+) + H2O = 2''-O-succinyl-ADP-D-ribose + nicotinamide + L-lysyl-[protein]. Its function is as follows. NAD-dependent lysine deacetylase and desuccinylase that specifically removes acetyl and succinyl groups on target proteins. Modulates the activities of several proteins which are inactive in their acylated form. The polypeptide is NAD-dependent protein deacylase (Vibrio vulnificus (strain YJ016)).